Reading from the N-terminus, the 610-residue chain is Serine/threonine-protein kinase RCK2 (610 aa).

2 disordered regions span residues 1–55 and 99–127; these read MLKI…QDKN and TSVP…SLSE. Basic and acidic residues predominate over residues 11-24; it reads KKPDQADLSQESKK. Residues 31–55 show a composition bias toward polar residues; it reads RSSGTNNKDVSQITSSPKKSFQDKN. Phosphoserine is present on residues serine 46 and serine 50. In terms of domain architecture, Protein kinase spans 163–478; it reads YKLINKIGEG…IDQFLDDPWL (316 aa). An ATP-binding site is contributed by 169 to 177; it reads IGEGAFSKV. Phosphoserine is present on serine 187. Residue lysine 201 coordinates ATP. Aspartate 313 functions as the Proton acceptor in the catalytic mechanism. Position 350 is a phosphothreonine (threonine 350). Residues 493 to 506 form a calmodulin-binding region; it reads KKAGTSERRHPHKK. Residue serine 520 is modified to Phosphoserine. The interval 541–564 is disordered; sequence EDRMGTRGGLGSLAEDEELEDSYS.

Belongs to the protein kinase superfamily. CAMK Ser/Thr protein kinase family. CaMK subfamily. Autophosphorylated. Phosphorylated by HOG1 at Ser-520 after osmotic stress.

It is found in the cytoplasm. The catalysed reaction is L-seryl-[protein] + ATP = O-phospho-L-seryl-[protein] + ADP + H(+). The enzyme catalyses L-threonyl-[protein] + ATP = O-phospho-L-threonyl-[protein] + ADP + H(+). Its activity is regulated as follows. Activated by Ser-520 phosphorylation by HOG1. Its function is as follows. Serine/threonine-protein kinase involved in a signal transduction pathway that is activated by changes in the osmolarity of the extracellular environment. In Saccharomyces cerevisiae (strain ATCC 204508 / S288c) (Baker's yeast), this protein is Serine/threonine-protein kinase RCK2 (RCK2).